Reading from the N-terminus, the 202-residue chain is Glycerol-3-phosphate acyltransferase (202 aa).

The next 4 membrane-spanning stretches (helical) occupy residues 2–22 (ANLL…AVVV), 85–105 (LAMV…HRFA), 119–139 (AINP…AFFF), and 158–178 (VLME…ILLI).

The protein belongs to the PlsY family. Probably interacts with PlsX.

The protein localises to the cell inner membrane. The catalysed reaction is an acyl phosphate + sn-glycerol 3-phosphate = a 1-acyl-sn-glycero-3-phosphate + phosphate. The protein operates within lipid metabolism; phospholipid metabolism. Its function is as follows. Catalyzes the transfer of an acyl group from acyl-phosphate (acyl-PO(4)) to glycerol-3-phosphate (G3P) to form lysophosphatidic acid (LPA). This enzyme utilizes acyl-phosphate as fatty acyl donor, but not acyl-CoA or acyl-ACP. The chain is Glycerol-3-phosphate acyltransferase from Cupriavidus pinatubonensis (strain JMP 134 / LMG 1197) (Cupriavidus necator (strain JMP 134)).